The chain runs to 196 residues: MARSFYSHIKEAWKQPGDGKLAELQWQRKQEWRDQGAIVRIDRPTRLDKARELGYKAKQGVIIARVAVRKGGARKKRFTSGRRSKRQGVNRLGRRTSIQRIAEERAARKYPNLRTLASYWVGEDGSQKWHEIILIDPEHAAIENDDDLNWICDDTHKGRAFRGLTNAGRSNRGLQNRGKGAEHTRPSAGSGSRRGK.

Residues 162-196 form a disordered region; that stretch reads RGLTNAGRSNRGLQNRGKGAEHTRPSAGSGSRRGK.

It belongs to the eukaryotic ribosomal protein eL15 family.

In Haloquadratum walsbyi (strain DSM 16790 / HBSQ001), this protein is Large ribosomal subunit protein eL15.